A 461-amino-acid polypeptide reads, in one-letter code: MVNGEAEAECTRASLLGRYEIGRTLGEGNFGKVKYARHLATGAHFAIKILDRNKILSLRFDDQIRREIGTLKLLKHPNVVRLHEVAASKTKIYMVLEYVNGGELFDKIAVKGKLSEHEGRRLFQQLIDAVSYCHDKGVYHRDLKPENVLVDRRGNIKISDFGLSALPQHLGNDGLLHTTCGSPNYIAPEVLQNRGYDGSLSDIWSCGVILYVMLVGYLPFDDRNLVVLYQKIFKGDTQIPKWLSPSARDLLRRILEPNPMKRINIAGIKEHEWFQKDYTPVVPYDDDDDNYLDSVLPIKEQIDEAKQEKPTHINAFQLIGMASALDLSGFFEEEDASQRKIRFTSTHSPKDLFDKIENVVTEMGFQVQRGNSKLKVMKNGRGSKNLRNPSSFLVCTEVVELGPSLYVVELKKSHGDPILYRQLCERLSDELGVCKTEQIQRTESLEDDLESFDSGSSLPGF.

The Protein kinase domain maps to 19–274 (YEIGRTLGEG…IAGIKEHEWF (256 aa)). ATP contacts are provided by residues 25–33 (LGEGNFGKV) and K48. D142 serves as the catalytic Proton acceptor. The interval 160-189 (DFGLSALPQHLGNDGLLHTTCGSPNYIAPE) is activation loop. The NAF domain maps to 308 to 332 (EKPTHINAFQLIGMASALDLSGFFE). Residues 338–367 (QRKIRFTSTHSPKDLFDKIENVVTEMGFQV) are PPI.

The protein belongs to the protein kinase superfamily. CAMK Ser/Thr protein kinase family. SNF1 subfamily. Requires Mn(2+) as cofactor.

It catalyses the reaction L-seryl-[protein] + ATP = O-phospho-L-seryl-[protein] + ADP + H(+). The catalysed reaction is L-threonyl-[protein] + ATP = O-phospho-L-threonyl-[protein] + ADP + H(+). Functionally, CIPK serine-threonine protein kinases interact with CBL proteins. Binding of a CBL protein to the regulatory NAF domain of CIPK protein lead to the activation of the kinase in a calcium-dependent manner. The polypeptide is CBL-interacting protein kinase 1 (CIPK1) (Oryza sativa subsp. japonica (Rice)).